The sequence spans 485 residues: Glutamyl-tRNA(Gln) amidotransferase subunit A (485 aa).

Active-site charge relay system residues include Lys76 and Ser151. The Acyl-ester intermediate role is filled by Ser175.

It belongs to the amidase family. GatA subfamily. Heterotrimer of A, B and C subunits.

It carries out the reaction L-glutamyl-tRNA(Gln) + L-glutamine + ATP + H2O = L-glutaminyl-tRNA(Gln) + L-glutamate + ADP + phosphate + H(+). Functionally, allows the formation of correctly charged Gln-tRNA(Gln) through the transamidation of misacylated Glu-tRNA(Gln) in organisms which lack glutaminyl-tRNA synthetase. The reaction takes place in the presence of glutamine and ATP through an activated gamma-phospho-Glu-tRNA(Gln). In Methylococcus capsulatus (strain ATCC 33009 / NCIMB 11132 / Bath), this protein is Glutamyl-tRNA(Gln) amidotransferase subunit A.